We begin with the raw amino-acid sequence, 483 residues long: Membrane-bound lytic murein transglycosylase F (483 aa).

Residues 1–18 (MKGLIARFIAGFALLLWA) form the signal peptide. The segment at 19-267 (WDMVFPWQQL…RIEEKYFNHL (249 aa)) is non-LT domain. An LT domain region spans residues 269-483 (HFDYVDIQSY…SKESDSTLKE (215 aa)). Residue glutamate 312 is part of the active site. The disordered stretch occupies residues 459–483 (QIQNNEEQSSVPQEISKESDSTLKE). Positions 473 to 483 (ISKESDSTLKE) are enriched in basic and acidic residues.

The protein in the N-terminal section; belongs to the bacterial solute-binding protein 3 family. This sequence in the C-terminal section; belongs to the transglycosylase Slt family.

The protein localises to the cell outer membrane. The enzyme catalyses Exolytic cleavage of the (1-&gt;4)-beta-glycosidic linkage between N-acetylmuramic acid (MurNAc) and N-acetylglucosamine (GlcNAc) residues in peptidoglycan, from either the reducing or the non-reducing ends of the peptidoglycan chains, with concomitant formation of a 1,6-anhydrobond in the MurNAc residue.. Murein-degrading enzyme that degrades murein glycan strands and insoluble, high-molecular weight murein sacculi, with the concomitant formation of a 1,6-anhydromuramoyl product. Lytic transglycosylases (LTs) play an integral role in the metabolism of the peptidoglycan (PG) sacculus. Their lytic action creates space within the PG sacculus to allow for its expansion as well as for the insertion of various structures such as secretion systems and flagella. This is Membrane-bound lytic murein transglycosylase F from Actinobacillus pleuropneumoniae serotype 7 (strain AP76).